Here is a 154-residue protein sequence, read N- to C-terminus: Resuscitation-promoting factor RpfD (154 aa).

The chain crosses the membrane as a helical span at residues 21–41; the sequence is IVCTVFIETAVVATMFVALLG.

Belongs to the transglycosylase family. Rpf subfamily.

It is found in the cell membrane. In terms of biological role, factor that stimulates resuscitation of dormant cells. Has peptidoglycan (PG) hydrolytic activity. PG fragments could either directly activate the resuscitation pathway of dormant bacteria or serve as a substrate for endogenous Rpf, resulting in low molecular weight products with resuscitation activity. The sequence is that of Resuscitation-promoting factor RpfD (rpfD) from Mycobacterium tuberculosis (strain CDC 1551 / Oshkosh).